A 394-amino-acid polypeptide reads, in one-letter code: Dual specificity protein phosphatase 4 (394 aa).

Valine 2 is modified (N-acetylvaline). Positions 41 to 159 (SGGKCLLLDC…FSSEYPEFCS (119 aa)) constitute a Rhodanese domain. The Tyrosine-protein phosphatase domain occupies 195-336 (GPVEILPFLY…LLQFESQVLA (142 aa)). Cysteine 280 serves as the catalytic Phosphocysteine intermediate. Residues serine 386 and serine 391 each carry the phosphoserine; by MAPK modification.

The protein belongs to the protein-tyrosine phosphatase family. Non-receptor class dual specificity subfamily. In terms of assembly, hollow spherical complex composed of 24 subunits with pseudooctahedral symmetry, has a tetramer as the basic unit. Phosphorylation in the C-terminus by ERK1/2 inhibits proteasomal degradation and stabilizes the protein.

The protein localises to the nucleus. The enzyme catalyses O-phospho-L-tyrosyl-[protein] + H2O = L-tyrosyl-[protein] + phosphate. The catalysed reaction is O-phospho-L-seryl-[protein] + H2O = L-seryl-[protein] + phosphate. It carries out the reaction O-phospho-L-threonyl-[protein] + H2O = L-threonyl-[protein] + phosphate. In terms of biological role, regulates mitogenic signal transduction by dephosphorylating both Thr and Tyr residues on MAP kinases ERK1 and ERK2. In Homo sapiens (Human), this protein is Dual specificity protein phosphatase 4 (DUSP4).